Here is a 443-residue protein sequence, read N- to C-terminus: 26S proteasome regulatory subunit 4 homolog B (443 aa).

2 disordered regions span residues 1–55 and 87–108; these read MGQG…LPTV and RLKP…LRGT. Composition is skewed to basic and acidic residues over residues 12–28 and 87–106; these read QGDR…KKFE and RLKP…DDLR. 229–236 lines the ATP pocket; sequence GEPGTGKT. Glycyl lysine isopeptide (Lys-Gly) (interchain with G-Cter in ubiquitin) cross-links involve residues K296 and K433.

It belongs to the AAA ATPase family. In terms of assembly, component of the 19S regulatory particle (RP/PA700) base subcomplex of the 26S proteasome. The 26S proteasome is composed of a core protease (CP), known as the 20S proteasome, capped at one or both ends by the 19S regulatory particle (RP/PA700). The RP/PA700 complex is composed of at least 17 different subunits in two subcomplexes, the base and the lid, which form the portions proximal and distal to the 20S proteolytic core, respectively. Preferentially expressed in the root and shoot apical meristem.

It localises to the cytoplasm. The protein resides in the nucleus. In terms of biological role, the 26S protease is involved in the ATP-dependent degradation of ubiquitinated proteins. The regulatory (or ATPase) complex confers ATP dependency and substrate specificity to the 26S complex. Acts redundantly with RPT2A in the regulation of gametogenesis. With RPT2A plays a critical role in 26S proteasome assembly. This chain is 26S proteasome regulatory subunit 4 homolog B, found in Arabidopsis thaliana (Mouse-ear cress).